The following is a 386-amino-acid chain: RNA polymerase sigma factor SigA (386 aa).

Residues 154 to 224 (LAEANLRLVV…TRAIADQART (71 aa)) form a sigma-70 factor domain-2 region. The Interaction with polymerase core subunit RpoC motif lies at 178-181 (DLIQ). The sigma-70 factor domain-3 stretch occupies residues 233–309 (ETINKLIRVQ…DDVIESPVDY (77 aa)). Residues 322–375 (VMDTLTDREENVLRMRFGLDDGRMHTLEDVGKQFKVTRERIRQIEAKAIKKLRH) form a sigma-70 factor domain-4 region. Residues 348–367 (LEDVGKQFKVTRERIRQIEA) constitute a DNA-binding region (H-T-H motif).

The protein belongs to the sigma-70 factor family. RpoD/SigA subfamily. As to quaternary structure, interacts transiently with the RNA polymerase catalytic core.

The protein resides in the cytoplasm. Its function is as follows. Sigma factors are initiation factors that promote the attachment of RNA polymerase to specific initiation sites and are then released. This sigma factor is the primary sigma factor during exponential growth. The sequence is that of RNA polymerase sigma factor SigA from Lactococcus lactis subsp. lactis (strain IL1403) (Streptococcus lactis).